The following is a 192-amino-acid chain: Phosphoheptose isomerase (192 aa).

Positions 37–192 constitute an SIS domain; the sequence is LADSFKAGGK…IQLIEKEMVK (156 aa). 52 to 54 is a substrate binding site; sequence NGG. Residues His61 and Glu65 each coordinate Zn(2+). Substrate-binding positions include Glu65, 93–94, 119–121, Ser124, and Gln172; these read ND and STS. Residues Gln172 and His180 each contribute to the Zn(2+) site.

It belongs to the SIS family. GmhA subfamily. In terms of assembly, homotetramer. Zn(2+) serves as cofactor.

The protein resides in the cytoplasm. The enzyme catalyses 2 D-sedoheptulose 7-phosphate = D-glycero-alpha-D-manno-heptose 7-phosphate + D-glycero-beta-D-manno-heptose 7-phosphate. It participates in carbohydrate biosynthesis; D-glycero-D-manno-heptose 7-phosphate biosynthesis; D-glycero-alpha-D-manno-heptose 7-phosphate and D-glycero-beta-D-manno-heptose 7-phosphate from sedoheptulose 7-phosphate: step 1/1. Functionally, catalyzes the isomerization of sedoheptulose 7-phosphate in D-glycero-D-manno-heptose 7-phosphate. The protein is Phosphoheptose isomerase of Escherichia coli O139:H28 (strain E24377A / ETEC).